A 150-amino-acid chain; its full sequence is Large ribosomal subunit protein bL9 (150 aa).

It belongs to the bacterial ribosomal protein bL9 family.

Its function is as follows. Binds to the 23S rRNA. This chain is Large ribosomal subunit protein bL9, found in Photorhabdus laumondii subsp. laumondii (strain DSM 15139 / CIP 105565 / TT01) (Photorhabdus luminescens subsp. laumondii).